We begin with the raw amino-acid sequence, 1186 residues long: ATP-dependent helicase/deoxyribonuclease subunit B (1186 aa).

It belongs to the helicase family. AddB/RexB type 2 subfamily. Heterodimer of AddA and RexB. Mg(2+) serves as cofactor.

The heterodimer acts as both an ATP-dependent DNA helicase and an ATP-dependent, dual-direction single-stranded exonuclease. Recognizes the chi site generating a DNA molecule suitable for the initiation of homologous recombination. This subunit has 5' -&gt; 3' nuclease activity but not helicase activity. In Latilactobacillus sakei subsp. sakei (strain 23K) (Lactobacillus sakei subsp. sakei), this protein is ATP-dependent helicase/deoxyribonuclease subunit B.